The chain runs to 428 residues: Tyrosine--tRNA ligase (428 aa).

Tyr34 contacts L-tyrosine. The 'HIGH' region motif lies at 39 to 48 (PTADSLHIGH). L-tyrosine contacts are provided by Tyr171 and Gln175. The short motif at 236-240 (KFGKT) is the 'KMSKS' region element. Residue Lys239 coordinates ATP. In terms of domain architecture, S4 RNA-binding spans 358-424 (VGLIDLLVDA…GKKKYFLIQV (67 aa)).

This sequence belongs to the class-I aminoacyl-tRNA synthetase family. TyrS type 1 subfamily. Homodimer.

Its subcellular location is the cytoplasm. It catalyses the reaction tRNA(Tyr) + L-tyrosine + ATP = L-tyrosyl-tRNA(Tyr) + AMP + diphosphate + H(+). In terms of biological role, catalyzes the attachment of tyrosine to tRNA(Tyr) in a two-step reaction: tyrosine is first activated by ATP to form Tyr-AMP and then transferred to the acceptor end of tRNA(Tyr). This chain is Tyrosine--tRNA ligase, found in Oceanobacillus iheyensis (strain DSM 14371 / CIP 107618 / JCM 11309 / KCTC 3954 / HTE831).